Here is a 257-residue protein sequence, read N- to C-terminus: 1-(5-phosphoribosyl)-5-[(5-phosphoribosylamino)methylideneamino] imidazole-4-carboxamide isomerase (257 aa).

Catalysis depends on aspartate 8, which acts as the Proton acceptor. Aspartate 129 (proton donor) is an active-site residue.

It belongs to the HisA/HisF family.

The protein resides in the cytoplasm. The enzyme catalyses 1-(5-phospho-beta-D-ribosyl)-5-[(5-phospho-beta-D-ribosylamino)methylideneamino]imidazole-4-carboxamide = 5-[(5-phospho-1-deoxy-D-ribulos-1-ylimino)methylamino]-1-(5-phospho-beta-D-ribosyl)imidazole-4-carboxamide. It participates in amino-acid biosynthesis; L-histidine biosynthesis; L-histidine from 5-phospho-alpha-D-ribose 1-diphosphate: step 4/9. The chain is 1-(5-phosphoribosyl)-5-[(5-phosphoribosylamino)methylideneamino] imidazole-4-carboxamide isomerase from Rippkaea orientalis (strain PCC 8801 / RF-1) (Cyanothece sp. (strain PCC 8801)).